Consider the following 437-residue polypeptide: Selenocysteine lyase (437 aa).

Met-1 bears the N-acetylmethionine mark. The interval 1 to 30 is disordered; it reads MEAAGARNRDARSRAEKSPPESRKVYMDYN. Basic and acidic residues predominate over residues 7 to 26; the sequence is RNRDARSRAEKSPPESRKVY. An N6-(pyridoxal phosphate)lysine modification is found at Lys-252. Catalysis depends on Cys-380, which acts as the S-selanylcysteine intermediate.

It belongs to the class-V pyridoxal-phosphate-dependent aminotransferase family. In terms of assembly, homodimer. Pyridoxal 5'-phosphate is required as a cofactor.

It is found in the cytoplasm. The protein localises to the cytosol. The catalysed reaction is L-selenocysteine + AH2 = hydrogenselenide + L-alanine + A + H(+). Functionally, catalyzes the decomposition of L-selenocysteine to L-alanine and elemental selenium. This Bos taurus (Bovine) protein is Selenocysteine lyase (SCLY).